A 308-amino-acid chain; its full sequence is D-alanine--D-alanine ligase (308 aa).

The 200-residue stretch at 106–305 (KMLWKAFGLP…FEQLVVKILE (200 aa)) folds into the ATP-grasp domain. 136–191 (VEKLGLPLMVKPSLEGSSVGLTKVNAIDDLKSAVEFALQYDETVLIEEWLSGDELT) contacts ATP. Residues Asp259, Glu272, and Asn274 each contribute to the Mg(2+) site.

Belongs to the D-alanine--D-alanine ligase family. Mg(2+) is required as a cofactor. The cofactor is Mn(2+).

Its subcellular location is the cytoplasm. The catalysed reaction is 2 D-alanine + ATP = D-alanyl-D-alanine + ADP + phosphate + H(+). It functions in the pathway cell wall biogenesis; peptidoglycan biosynthesis. Functionally, cell wall formation. This chain is D-alanine--D-alanine ligase, found in Histophilus somni (strain 2336) (Haemophilus somnus).